We begin with the raw amino-acid sequence, 195 residues long: Acireductone dioxygenase 2 (195 aa).

Fe(2+) contacts are provided by His-94, His-96, Glu-100, and His-139. Positions 94, 96, 100, and 139 each coordinate Ni(2+).

It belongs to the acireductone dioxygenase (ARD) family. Fe(2+) is required as a cofactor. Ni(2+) serves as cofactor.

The protein localises to the cytoplasm. The protein resides in the nucleus. It catalyses the reaction 1,2-dihydroxy-5-(methylsulfanyl)pent-1-en-3-one + O2 = 4-methylsulfanyl-2-oxobutanoate + formate + 2 H(+). The catalysed reaction is 1,2-dihydroxy-5-(methylsulfanyl)pent-1-en-3-one + O2 = 3-(methylsulfanyl)propanoate + CO + formate + 2 H(+). Its pathway is amino-acid biosynthesis; L-methionine biosynthesis via salvage pathway; L-methionine from S-methyl-5-thio-alpha-D-ribose 1-phosphate: step 5/6. Functionally, catalyzes 2 different reactions between oxygen and the acireductone 1,2-dihydroxy-3-keto-5-methylthiopentene (DHK-MTPene) depending upon the metal bound in the active site. Fe-containing acireductone dioxygenase (Fe-ARD) produces formate and 2-keto-4-methylthiobutyrate (KMTB), the alpha-ketoacid precursor of methionine in the methionine recycle pathway. Ni-containing acireductone dioxygenase (Ni-ARD) produces methylthiopropionate, carbon monoxide and formate, and does not lie on the methionine recycle pathway. In Physcomitrium patens (Spreading-leaved earth moss), this protein is Acireductone dioxygenase 2.